A 177-amino-acid polypeptide reads, in one-letter code: MSHQQPPSYATEPNTMFVQADPSNFRNIVQKLTGAPPDISSSSFSAVSAAHQKLPLTPKKPAFKLHERRQSSKKMELKVNNITNPNDAFSHFHRGFLVSPVSHLDPFWARVSPHSAREEHHAQPDKEEQKAIAEKGFYFLPSPRSGSEPAPELLPLFPLRSPNGTNHRIHEDNHRDS.

Positions 25–34 (FRNIVQKLTG) match the VQ motif. A phosphoserine mark is found at Ser-43, Ser-99, Ser-115, Ser-142, and Ser-145. Positions 115–133 (SAREEHHAQPDKEEQKAIA) are enriched in basic and acidic residues. The interval 115-177 (SAREEHHAQP…RIHEDNHRDS (63 aa)) is disordered. The segment covering 148–159 (EPAPELLPLFPL) has biased composition (low complexity). Ser-161 is subject to Phosphoserine. Positions 168–177 (RIHEDNHRDS) are enriched in basic and acidic residues.

In terms of processing, phosphorylated on serine residues by MPK6.

It is found in the nucleus. Its function is as follows. May modulate WRKY transcription factor activities. The polypeptide is VQ motif-containing protein 11 (Arabidopsis thaliana (Mouse-ear cress)).